Consider the following 479-residue polypeptide: ATP-dependent protease ATPase subunit HslU (479 aa).

ATP contacts are provided by residues isoleucine 32, 74–79 (GVGKTE), aspartate 290, glutamate 355, and arginine 427.

The protein belongs to the ClpX chaperone family. HslU subfamily. A double ring-shaped homohexamer of HslV is capped on each side by a ring-shaped HslU homohexamer. The assembly of the HslU/HslV complex is dependent on binding of ATP.

It is found in the cytoplasm. In terms of biological role, ATPase subunit of a proteasome-like degradation complex; this subunit has chaperone activity. The binding of ATP and its subsequent hydrolysis by HslU are essential for unfolding of protein substrates subsequently hydrolyzed by HslV. HslU recognizes the N-terminal part of its protein substrates and unfolds these before they are guided to HslV for hydrolysis. The polypeptide is ATP-dependent protease ATPase subunit HslU (Leptospira interrogans serogroup Icterohaemorrhagiae serovar Lai (strain 56601)).